A 218-amino-acid chain; its full sequence is MFTGIIESIGNIGAIIRHNEDLSIVVNTNNLDISDVNIGDSIATNGVCLTVSKLLPSGYTADLSLETYKRTAFHSYRIGQEVNLEKAMLPTTRLGGHLVSGHVDGVGEVIEFKRNGRAINIWVAVPVQLKKYLSEKGSVTIDGISLTINAVYQNVIKLTIVPHTLAETNLVNINIDKKVNVEIDMMARYLEKLIKVDRYESEKTSNVSMDLERYGFIS.

2 Lumazine-binding repeats span residues 1-97 (MFTG…LGGH) and 98-194 (LVSG…EKLI). Residues 4 to 6 (GII), 48 to 50 (CLT), 62 to 67 (DLSLET), 101 to 103 (GHV), K136, 145 to 147 (SLT), and 159 to 164 (TIVPHT) each bind 2,4-dihydroxypteridine.

Homotrimer.

The catalysed reaction is 2 6,7-dimethyl-8-(1-D-ribityl)lumazine + H(+) = 5-amino-6-(D-ribitylamino)uracil + riboflavin. The protein operates within cofactor biosynthesis; riboflavin biosynthesis; riboflavin from 2-hydroxy-3-oxobutyl phosphate and 5-amino-6-(D-ribitylamino)uracil: step 2/2. Functionally, catalyzes the dismutation of two molecules of 6,7-dimethyl-8-ribityllumazine, resulting in the formation of riboflavin and 5-amino-6-(D-ribitylamino)uracil. The polypeptide is Riboflavin synthase (ribE) (Photobacterium leiognathi).